The following is a 90-amino-acid chain: Small ribosomal subunit protein bS18 (90 aa).

This sequence belongs to the bacterial ribosomal protein bS18 family. Part of the 30S ribosomal subunit. Forms a tight heterodimer with protein bS6.

Its function is as follows. Binds as a heterodimer with protein bS6 to the central domain of the 16S rRNA, where it helps stabilize the platform of the 30S subunit. This Bordetella avium (strain 197N) protein is Small ribosomal subunit protein bS18.